Consider the following 89-residue polypeptide: Small ribosomal subunit protein uS15 (89 aa).

Over residues 1–21 (MVLDPTQKKSVIDAHAKHEGD) the composition is skewed to basic and acidic residues. The tract at residues 1 to 24 (MVLDPTQKKSVIDAHAKHEGDTGS) is disordered.

This sequence belongs to the universal ribosomal protein uS15 family. In terms of assembly, part of the 30S ribosomal subunit. Forms a bridge to the 50S subunit in the 70S ribosome, contacting the 23S rRNA.

One of the primary rRNA binding proteins, it binds directly to 16S rRNA where it helps nucleate assembly of the platform of the 30S subunit by binding and bridging several RNA helices of the 16S rRNA. Its function is as follows. Forms an intersubunit bridge (bridge B4) with the 23S rRNA of the 50S subunit in the ribosome. This is Small ribosomal subunit protein uS15 from Desulfovibrio desulfuricans (strain ATCC 27774 / DSM 6949 / MB).